The following is a 910-amino-acid chain: Disease susceptibility protein LOV1 (910 aa).

Residues 22-60 adopt a coiled-coil conformation; sequence ARLNGIGEQVDGLKRQLGRLQSLLKDADAKKHESERVRN. The 293-residue stretch at 169–461 folds into the NB-ARC domain; it reads EQSVEALAGH…AAEGIITSSD (293 aa). 6 LRR repeats span residues 584–609, 610–632, 634–655, 700–725, 726–751, and 847–871; these read LPLL…IGDL, IHLR…LRNL, LLLY…LKEM, MTKL…LGQL, RSLE…IVLN, and MPLL…NYIT.

It belongs to the disease resistance NB-LRR family. RPP8/HRT subfamily.

Functionally, confers susceptibility to the fungus Cochliobolus victoriae by conditioning victorin-dependent (victorin is a toxin synthesized by C.victoriae) induction of defense-associated proteins. The sequence is that of Disease susceptibility protein LOV1 (LOV1) from Arabidopsis thaliana (Mouse-ear cress).